The sequence spans 55 residues: Riparin-1.4 (55 aa).

A signal peptide spans 1–15 (MKIIVVLAVLMLVSA). Positions 16 to 41 (QVCLVSAAEMGHSSDNELSSRDLVKR) are excised as a propeptide. C47 and C53 form a disulfide bridge. Residues 54–55 (NH) constitute a propeptide that is removed on maturation.

Expressed by the skin glands.

Its subcellular location is the secreted. This is Riparin-1.4 from Crinia riparia (Streambank froglet).